The following is a 393-amino-acid chain: Carbamoyl phosphate synthase small chain (393 aa).

Residues 1-194 (MSKDTTTYQG…TYVIEAEGEE (194 aa)) form a CPSase region. The L-glutamine site is built by S61, G245, and G247. Residues 195-390 (RHTVVAYDLG…VELMDADAQK (196 aa)) enclose the Glutamine amidotransferase type-1 domain. The active-site Nucleophile is C273. L-glutamine contacts are provided by F274, Q277, N315, G317, and F318. Active-site residues include H363 and E365.

This sequence belongs to the CarA family. As to quaternary structure, composed of two chains; the small (or glutamine) chain promotes the hydrolysis of glutamine to ammonia, which is used by the large (or ammonia) chain to synthesize carbamoyl phosphate. Tetramer of heterodimers (alpha,beta)4.

The enzyme catalyses hydrogencarbonate + L-glutamine + 2 ATP + H2O = carbamoyl phosphate + L-glutamate + 2 ADP + phosphate + 2 H(+). The catalysed reaction is L-glutamine + H2O = L-glutamate + NH4(+). Its pathway is amino-acid biosynthesis; L-arginine biosynthesis; carbamoyl phosphate from bicarbonate: step 1/1. It functions in the pathway pyrimidine metabolism; UMP biosynthesis via de novo pathway; (S)-dihydroorotate from bicarbonate: step 1/3. In terms of biological role, small subunit of the glutamine-dependent carbamoyl phosphate synthetase (CPSase). CPSase catalyzes the formation of carbamoyl phosphate from the ammonia moiety of glutamine, carbonate, and phosphate donated by ATP, constituting the first step of 2 biosynthetic pathways, one leading to arginine and/or urea and the other to pyrimidine nucleotides. The small subunit (glutamine amidotransferase) binds and cleaves glutamine to supply the large subunit with the substrate ammonia. In Corynebacterium glutamicum (strain ATCC 13032 / DSM 20300 / JCM 1318 / BCRC 11384 / CCUG 27702 / LMG 3730 / NBRC 12168 / NCIMB 10025 / NRRL B-2784 / 534), this protein is Carbamoyl phosphate synthase small chain.